A 119-amino-acid chain; its full sequence is Lamprin 1.8-10 (119 aa).

The first 19 residues, 1 to 19, serve as a signal peptide directing secretion; the sequence is MAATMQALLVIALLHLATA. Tandem repeats lie at residues 41–45, 46–50, 51–55, 56–60, 61–65, 66–70, and 86–90. The segment at 41 to 90 is 7 X 5 AA approximate repeats; that stretch reads GGLGYGGLGYGGLGYGGLGVAGLGYGGLGYPGAALGGAYTHHAALGGLGY.

In terms of assembly, the polymeric lamprin chains self-aggregate to form fibers and have secondary structures particularly rich in beta-sheets and in beta-turns.

Its subcellular location is the secreted. The protein resides in the extracellular space. It is found in the extracellular matrix. Self-aggregating protein that is part of the soluble form of lamprin. The protein is Lamprin 1.8-10 of Petromyzon marinus (Sea lamprey).